A 133-amino-acid chain; its full sequence is UPF0102 protein Fnod_1509 (133 aa).

This sequence belongs to the UPF0102 family.

The chain is UPF0102 protein Fnod_1509 from Fervidobacterium nodosum (strain ATCC 35602 / DSM 5306 / Rt17-B1).